The sequence spans 26 residues: TICYNHLTIRSEVTEICIICDDDYYF.

This sequence belongs to the three-finger toxin family. Short-chain subfamily. Orphan group VIII (haditoxin) sub-subfamily. Homodimer; non-covalently linked. Expressed by the venom gland.

It localises to the secreted. Functionally, antagonist of muscle and neuronal nicotinic acetylcholine receptors (nAChR) with highest affinity for neuronal alpha-7/CHRNA7 nAChRs. The chain is Muscarinic toxin-like protein 1 from Naja naja (Indian cobra).